Reading from the N-terminus, the 379-residue chain is Chaperone protein DnaJ (379 aa).

The 66-residue stretch at Cys-7–Gly-72 folds into the J domain. The segment at Gly-135–Glu-213 adopts a CR-type zinc-finger fold. Zn(2+)-binding residues include Cys-148, Cys-151, Cys-165, Cys-168, Cys-187, Cys-190, Cys-201, and Cys-204. CXXCXGXG motif repeat units follow at residues Cys-148–Gly-155, Cys-165–Gly-172, Cys-187–Gly-194, and Cys-201–Gly-208.

This sequence belongs to the DnaJ family. Homodimer. Zn(2+) is required as a cofactor.

Its subcellular location is the cytoplasm. In terms of biological role, participates actively in the response to hyperosmotic and heat shock by preventing the aggregation of stress-denatured proteins and by disaggregating proteins, also in an autonomous, DnaK-independent fashion. Unfolded proteins bind initially to DnaJ; upon interaction with the DnaJ-bound protein, DnaK hydrolyzes its bound ATP, resulting in the formation of a stable complex. GrpE releases ADP from DnaK; ATP binding to DnaK triggers the release of the substrate protein, thus completing the reaction cycle. Several rounds of ATP-dependent interactions between DnaJ, DnaK and GrpE are required for fully efficient folding. Also involved, together with DnaK and GrpE, in the DNA replication of plasmids through activation of initiation proteins. The sequence is that of Chaperone protein DnaJ from Rhodopseudomonas palustris (strain BisB18).